Here is a 193-residue protein sequence, read N- to C-terminus: ATP-dependent Clp protease proteolytic subunit 2 (193 aa).

Serine 98 acts as the Nucleophile in catalysis. Histidine 123 is an active-site residue.

This sequence belongs to the peptidase S14 family. As to quaternary structure, fourteen ClpP subunits assemble into 2 heptameric rings which stack back to back to give a disk-like structure with a central cavity, resembling the structure of eukaryotic proteasomes.

It localises to the cytoplasm. The enzyme catalyses Hydrolysis of proteins to small peptides in the presence of ATP and magnesium. alpha-casein is the usual test substrate. In the absence of ATP, only oligopeptides shorter than five residues are hydrolyzed (such as succinyl-Leu-Tyr-|-NHMec, and Leu-Tyr-Leu-|-Tyr-Trp, in which cleavage of the -Tyr-|-Leu- and -Tyr-|-Trp bonds also occurs).. Its function is as follows. Cleaves peptides in various proteins in a process that requires ATP hydrolysis. Has a chymotrypsin-like activity. Plays a major role in the degradation of misfolded proteins. The protein is ATP-dependent Clp protease proteolytic subunit 2 of Bacillus cereus (strain ATCC 14579 / DSM 31 / CCUG 7414 / JCM 2152 / NBRC 15305 / NCIMB 9373 / NCTC 2599 / NRRL B-3711).